The sequence spans 80 residues: U6 snRNA-associated Sm-like protein LSm6 (80 aa).

A Sm domain is found at 7 to 79 (TPSDFLKQII…VLYISTQKRR (73 aa)). Lys-59 carries the post-translational modification N6-acetyllysine.

The protein belongs to the snRNP Sm proteins family. SmF/LSm6 subfamily. Component of the precatalytic spliceosome (spliceosome B complex). Component of the U4/U6-U5 tri-snRNP complex, a building block of the precatalytic spliceosome (spliceosome B complex). The U4/U6-U5 tri-snRNP complex is composed of the U4, U6 and U5 snRNAs and at least PRPF3, PRPF4, PRPF6, PRPF8, PRPF31, SNRNP200, TXNL4A, SNRNP40, SNRPB, SNRPD1, SNRPD2, SNRPD3, SNRPE, SNRPF, SNRPG, DDX23, CD2BP2, PPIH, SNU13, EFTUD2, SART1 and USP39, plus LSM2, LSM3, LSM4, LSM5, LSM6, LSM7 and LSM8. LSM2, LSM3, LSM4, LSM5, LSM6, LSM7 and LSM8 form a heptameric, ring-shaped subcomplex (the LSM2-8 complex) that is part of the U4/U6-U5 tri-snRNP complex and the precatalytic spliceosome. Component of the heptameric LSM1-LSM7 complex, which consists of LSM1, LSM2, LSM3, LSM4, LSM5, LSM6 and LSM7.

It localises to the cytoplasm. The protein localises to the nucleus. Functionally, plays a role in pre-mRNA splicing as component of the U4/U6-U5 tri-snRNP complex that is involved in spliceosome assembly, and as component of the precatalytic spliceosome (spliceosome B complex). The heptameric LSM2-8 complex binds specifically to the 3'-terminal U-tract of U6 snRNA. Component of LSm protein complexes, which are involved in RNA processing and may function in a chaperone-like manner, facilitating the efficient association of RNA processing factors with their substrates. Component of the cytoplasmic LSM1-LSM7 complex, which is thought to be involved in mRNA degradation by activating the decapping step in the 5'-to-3' mRNA decay pathway. This is U6 snRNA-associated Sm-like protein LSm6 (LSM6) from Homo sapiens (Human).